Here is a 227-residue protein sequence, read N- to C-terminus: ATP-dependent dethiobiotin synthetase BioD (227 aa).

ATP is bound at residue aspartate 13–valine 18. Threonine 17 serves as a coordination point for Mg(2+). The active site involves lysine 38. ATP-binding positions include aspartate 55, glutamate 116–glycine 119, and asparagine 176–arginine 177. Residues aspartate 55 and glutamate 116 each contribute to the Mg(2+) site.

The protein belongs to the dethiobiotin synthetase family. In terms of assembly, homodimer. Requires Mg(2+) as cofactor.

The protein resides in the cytoplasm. The enzyme catalyses (7R,8S)-7,8-diammoniononanoate + CO2 + ATP = (4R,5S)-dethiobiotin + ADP + phosphate + 3 H(+). Its pathway is cofactor biosynthesis; biotin biosynthesis; biotin from 7,8-diaminononanoate: step 1/2. Catalyzes a mechanistically unusual reaction, the ATP-dependent insertion of CO2 between the N7 and N8 nitrogen atoms of 7,8-diaminopelargonic acid (DAPA, also called 7,8-diammoniononanoate) to form a ureido ring. This Aliivibrio salmonicida (strain LFI1238) (Vibrio salmonicida (strain LFI1238)) protein is ATP-dependent dethiobiotin synthetase BioD.